We begin with the raw amino-acid sequence, 541 residues long: Cytosolic phospholipase A2 gamma (541 aa).

Positions 1 to 541 (MGSSEVSIIP…KDSARSCCLA (541 aa)) constitute a PLA2c domain. The active-site Nucleophile is Ser82. A required for lipid droplet localization region spans residues 260–292 (LTLKGLWRRAVANAKSIGHLIFARLLRLQESSQ). The residue at position 337 (Ser337) is a Phosphoserine. Asp385 serves as the catalytic Proton acceptor. Cys538 is modified (cysteine methyl ester). A lipid anchor (S-farnesyl cysteine) is attached at Cys538. A propeptide spans 539-541 (CLA) (removed in mature form).

(Microbial infection) Interacts with HCV non-structural protein 4B/NS4B; this interaction likely initiates the recruitment of replication complexes to lipid droplets. As to expression, highly expressed in heart and skeletal muscle.

Its subcellular location is the cell membrane. The protein resides in the endoplasmic reticulum membrane. It localises to the mitochondrion membrane. It is found in the lipid droplet. It carries out the reaction a 1,2-diacyl-sn-glycero-3-phosphocholine + H2O = a 1-acyl-sn-glycero-3-phosphocholine + a fatty acid + H(+). The catalysed reaction is a 1-O-alkyl-2-acyl-sn-glycero-3-phosphocholine + H2O = a 1-O-alkyl-sn-glycero-3-phosphocholine + a fatty acid + H(+). It catalyses the reaction 1,2-dihexadecanoyl-sn-glycero-3-phosphocholine + H2O = 1-hexadecanoyl-sn-glycero-3-phosphocholine + hexadecanoate + H(+). The enzyme catalyses 1-hexadecanoyl-2-(9Z-octadecenoyl)-sn-glycero-3-phosphocholine + H2O = 1-hexadecanoyl-sn-glycero-3-phosphocholine + (9Z)-octadecenoate + H(+). It carries out the reaction 1-hexadecanoyl-2-(9Z,12Z-octadecadienoyl)-sn-glycero-3-phosphocholine + H2O = (9Z,12Z)-octadecadienoate + 1-hexadecanoyl-sn-glycero-3-phosphocholine + H(+). The catalysed reaction is 1-hexadecanoyl-2-(5Z,8Z,11Z,14Z-eicosatetraenoyl)-sn-glycero-3-phosphocholine + H2O = 1-hexadecanoyl-sn-glycero-3-phosphocholine + (5Z,8Z,11Z,14Z)-eicosatetraenoate + H(+). It catalyses the reaction 1-O-hexadecyl-2-(5Z,8Z,11Z,14Z)-eicosatetraenoyl-sn-glycero-3-phosphocholine + H2O = 1-O-hexadecyl-sn-glycero-3-phosphocholine + (5Z,8Z,11Z,14Z)-eicosatetraenoate + H(+). The enzyme catalyses 1-hexadecanoyl-2-(5Z,8Z,11Z,14Z-eicosatetraenoyl)-sn-glycero-3-phosphocholine + H2O = 2-(5Z,8Z,11Z,14Z)-eicosatetraenoyl-sn-glycero-3-phosphocholine + hexadecanoate + H(+). It carries out the reaction a 1-acyl-sn-glycero-3-phosphocholine + H2O = sn-glycerol 3-phosphocholine + a fatty acid + H(+). The catalysed reaction is 1-hexadecanoyl-sn-glycero-3-phosphocholine + H2O = sn-glycerol 3-phosphocholine + hexadecanoate + H(+). It catalyses the reaction 2 1-hexadecanoyl-sn-glycero-3-phosphocholine = 1,2-dihexadecanoyl-sn-glycero-3-phosphocholine + sn-glycerol 3-phosphocholine. The enzyme catalyses 1-hexadecanoyl-sn-glycero-3-phosphoethanolamine + 1-hexadecanoyl-sn-glycero-3-phosphocholine = 1,2-dihexadecanoyl-sn-glycero-3-phosphoethanolamine + sn-glycerol 3-phosphocholine. It carries out the reaction 1-hexadecanoyl-sn-glycero-3-phosphoethanolamine + 1-hexadecanoyl-sn-glycero-3-phosphocholine = sn-glycero-3-phosphoethanolamine + 1,2-dihexadecanoyl-sn-glycero-3-phosphocholine. The catalysed reaction is 2 1-hexadecanoyl-sn-glycero-3-phosphoethanolamine = 1,2-dihexadecanoyl-sn-glycero-3-phosphoethanolamine + sn-glycero-3-phosphoethanolamine. It catalyses the reaction 1-O-hexadecyl-sn-glycero-3-phosphocholine + 1-hexadecanoyl-sn-glycero-3-phosphocholine = 1-O-hexadecyl-2-hexadecanoyl-sn-glycero-3-phosphocholine + sn-glycerol 3-phosphocholine. The enzyme catalyses a 1-O-(1Z-alkenyl)-sn-glycero-3-phosphoethanolamine + 1-hexadecanoyl-sn-glycero-3-phosphocholine = 1-O-(1Z)-alkenyl-2-hexadecanoyl-sn-glycero-3-phosphoethanolamine + sn-glycerol 3-phosphocholine. It carries out the reaction 1-O-hexadecyl-sn-glycero-3-phosphocholine + 1-hexadecanoyl-sn-glycero-3-phosphoethanolamine = 1-O-hexadecyl-2-hexadecanoyl-sn-glycero-3-phosphocholine + sn-glycero-3-phosphoethanolamine. The catalysed reaction is 1-octadecanoyl-2-(5Z,8Z,11Z,14Z)-eicosatetraenoyl-sn-glycero-3-phosphoethanolamine + 1-hexadecanoyl-sn-glycero-3-phosphocholine = 1-octadecanoyl-sn-glycero-3-phosphoethanolamine + 1-hexadecanoyl-2-(5Z,8Z,11Z,14Z-eicosatetraenoyl)-sn-glycero-3-phosphocholine. It catalyses the reaction 1-octadecanoyl-2-(5Z,8Z,11Z,14Z)-eicosatetraenoyl-sn-glycero-3-phosphoethanolamine + 1-O-hexadecyl-sn-glycero-3-phosphocholine = 1-octadecanoyl-sn-glycero-3-phosphoethanolamine + 1-O-hexadecyl-2-(5Z,8Z,11Z,14Z)-eicosatetraenoyl-sn-glycero-3-phosphocholine. The enzyme catalyses 1-hexadecanoyl-2-(9Z,12Z-octadecadienoyl)-sn-glycero-3-phosphocholine + a 1-O-(1Z-alkenyl)-sn-glycero-3-phosphoethanolamine = 1-O-(1Z-alkenyl)-2-(9Z,12Z-octadecadienoyl)-sn-glycero-3-phosphoethanolamine + 1-hexadecanoyl-sn-glycero-3-phosphocholine. It carries out the reaction 1-hexadecanoyl-2-(5Z,8Z,11Z,14Z-eicosatetraenoyl)-sn-glycero-3-phosphocholine + a 1-O-(1Z-alkenyl)-sn-glycero-3-phosphoethanolamine = 1-O-(1Z)-alkenyl-2-(5Z,8Z,11Z,14Z)-eicosatetraenoyl-sn-glycero-3-phosphoethanolamine + 1-hexadecanoyl-sn-glycero-3-phosphocholine. Not regulated by calcium, coenzyme A or ATP. Lysophospholipase activity is inhibited by palmitoyl-CoA. Lysophospholipase and O-acyltransferase activities are inhibited by methylarachidonoylfluorophosphonate. Lysophospholipase activity is inhibited by phosphatidate or lysophosphatidate. O-acyltransferase activity is up-regulated at low concentration (10-20 uM) of phosphatidate or lysophosphatidate, but inhibited at higher concentrations. Its function is as follows. Calcium-independent phospholipase, lysophospholipase and O-acyltransferase involved in phospholipid remodeling with implications in endoplasmic reticulum membrane homeostasis and lipid droplet biogenesis. Preferentially hydrolyzes the ester bond of the fatty acyl group attached at the sn-2 position of phospholipids with choline and ethanolamine head groups, producing lysophospholipids that are used in deacylation-reacylation cycles. Transfers the sn-1 fatty acyl from one lysophospholipid molecule to the sn-2 position of another lysophospholipid to form diacyl, alkylacyl and alkenylacyl glycerophospholipids. Cleaves ester bonds but not alkyl or alkenyl ether bonds at sn-1 position of lysophospholipids. Catalyzes sn-2 fatty acyl transfer from phospholipids to the sn-2 position of 1-O-alkyl or 1-O-alkenyl lysophospholipids with lower efficiency. In response to dietary fatty acids, may play a role in the formation of nascent lipid droplets from the endoplasmic reticulum likely by regulating the phospholipid composition of these organelles. (Microbial infection) May play a role in replication and assembly of human hepatitis C virus (HCV). In response to HCV infection, promotes remodeling of host endoplasmic reticulum membranes to form organelle-like structures called membranous web, where HCV replication occur. Can further mediate translocation of replication complexes to lipid droplets to enable virion assembly. In terms of biological role, (Microbial infection) May facilitate human T-lymphotropic virus type 1 (HTLV-1) infection by promoting leukotriene B4 (LTB4) biosynthesis. LTB4 acts as a chemoattractant for HTLV-1-infected CD4-positive T cells and favors cell to cell viral transmission. The polypeptide is Cytosolic phospholipase A2 gamma (PLA2G4C) (Homo sapiens (Human)).